Reading from the N-terminus, the 261-residue chain is MGLELYLDLLSQPCRSIYIFARTNNIPFEFKHVELFKDSVLGKKPAAASGAERPRTGPSNSEGDGKISLLKKVPVLKDGDFTLAECTAILLYLSRKYNTPDHWYPSDIKKRAQVDEYLSWHHANIRANAPKTMWIKVLIPLFTGQPQPSEKLQEVMEGLSTSLKQFEERFLQDKAFIIGSEISLADLVAIVELMQPVGVGCDIFEDRPRLMEWRRRVEEAVGKELFFQAHEMILNIKELSNIQIDPQLKEHLAPVLMKMLK.

Residues 2–101 form the GST N-terminal domain; sequence GLELYLDLLS…YLSRKYNTPD (100 aa). Glutathione-binding positions include 72 to 73 and 85 to 86; these read KV and EC. The GST C-terminal domain occupies 107–248; that stretch reads DIKKRAQVDE…LSNIQIDPQL (142 aa).

This sequence belongs to the GST superfamily. Theta family. As to quaternary structure, homodimer.

It is found in the cytoplasm. It carries out the reaction RX + glutathione = an S-substituted glutathione + a halide anion + H(+). Functionally, conjugation of reduced glutathione to a wide number of exogenous and endogenous hydrophobic electrophiles. The protein is Glutathione S-transferase theta-1 (GSTT1) of Gallus gallus (Chicken).